Consider the following 496-residue polypeptide: Glycogen synthase (496 aa).

K15 lines the ADP-alpha-D-glucose pocket.

This sequence belongs to the glycosyltransferase 1 family. Bacterial/plant glycogen synthase subfamily.

It catalyses the reaction [(1-&gt;4)-alpha-D-glucosyl](n) + ADP-alpha-D-glucose = [(1-&gt;4)-alpha-D-glucosyl](n+1) + ADP + H(+). The protein operates within glycan biosynthesis; glycogen biosynthesis. In terms of biological role, synthesizes alpha-1,4-glucan chains using ADP-glucose. In Natranaerobius thermophilus (strain ATCC BAA-1301 / DSM 18059 / JW/NM-WN-LF), this protein is Glycogen synthase.